A 170-amino-acid polypeptide reads, in one-letter code: Acetyl-CoA decarbonylase/synthase complex subunit epsilon 2 (170 aa).

It belongs to the CdhB family. In terms of assembly, heterotetramer of two alpha and two epsilon subunits. The ACDS complex is made up of alpha, epsilon, beta, gamma and delta subunits with a probable stoichiometry of (alpha(2)epsilon(2))(4)-beta(8)-(gamma(1)delta(1))(8).

It functions in the pathway one-carbon metabolism; methanogenesis from acetate. Functionally, part of a complex that catalyzes the reversible cleavage of acetyl-CoA, allowing growth on acetate as sole source of carbon and energy. The alpha-epsilon subcomponent functions as a carbon monoxide dehydrogenase. The precise role of the epsilon subunit is unclear; it may have a stabilizing role within the alpha(2)epsilon(2) component and/or be involved in electron transfer to FAD during a potential FAD-mediated CO oxidation. The sequence is that of Acetyl-CoA decarbonylase/synthase complex subunit epsilon 2 (cdhB2) from Methanosarcina thermophila.